A 417-amino-acid polypeptide reads, in one-letter code: Argininosuccinate synthase (417 aa).

Position 8–16 (8–16 (AYSGGLDTS)) interacts with ATP. Position 87 (Tyr87) interacts with L-citrulline. Gly117 serves as a coordination point for ATP. 3 residues coordinate L-aspartate: Thr119, Asn123, and Asp124. L-citrulline is bound at residue Asn123. L-citrulline-binding residues include Arg127, Ser175, Glu259, and Tyr271.

It belongs to the argininosuccinate synthase family. Type 1 subfamily. Homotetramer.

It is found in the cytoplasm. It catalyses the reaction L-citrulline + L-aspartate + ATP = 2-(N(omega)-L-arginino)succinate + AMP + diphosphate + H(+). The protein operates within amino-acid biosynthesis; L-arginine biosynthesis; L-arginine from L-ornithine and carbamoyl phosphate: step 2/3. In Clavibacter sepedonicus (Clavibacter michiganensis subsp. sepedonicus), this protein is Argininosuccinate synthase.